We begin with the raw amino-acid sequence, 659 residues long: MSDDNLISRPLTAGAHVSLRSMQEVAMNDRNASKMLSTYNVAYWGGNYYDVNELGHISVCPDPDIREARVDLAQLVKKMQLEQGQRLPALFCFPQILQHRLRSINAAFKRARESFGYEGGYFLVYPIKVNQHRRVIESLVNSGEPLGLEAGSKAEMMAVLAHAGMTRSVIVCNGYKDREYIRLALIGEKLGHKVYLVIEKMSEIKMVLEEAERLNVVPRLGVRARLASQGSGKWQASGGEKSKFGLSATQVLQLVDMLREANSLESLQLLHFHLGSQLSNIRDISTGVRESARFYVELHKLGVNIQCFDVGGGLGVDYEGTRSQSDCSVNYGLNEYANNVIWGIGDACNEHGLPHPTVITESGRAVTAHHTVLVSNVIGVERNEFCEPQPPEAGAPRALESLWDTWQEMQEPENRRSLREWLHDSQMDLHDVHTQYAHGMLDLTHRAWAEQLYLSICNEIQKQLDPSNRAHRPIIDELQERMADKLYVNFSLFQSMPDAWGIDQLFPVLPLEGLDKPPERRAVLLDITCDSDGTIDHYIDGDGVATTMPMPPYDPENPPLLGFFMVGAYQEILGNMHNLFGDTAAVDVYVFPDGTVEVEQTDEGDTVADMLEYVQLNPEKLLEHFRGQVKETDLDTELQAQFLEEFEAGLYGYTYLEDE.

Position 128 is an N6-(pyridoxal phosphate)lysine (K128). Substrate is bound at residue F308–Y318.

This sequence belongs to the Orn/Lys/Arg decarboxylase class-II family. SpeA subfamily. It depends on Mg(2+) as a cofactor. Pyridoxal 5'-phosphate is required as a cofactor.

The catalysed reaction is L-arginine + H(+) = agmatine + CO2. The protein operates within amine and polyamine biosynthesis; agmatine biosynthesis; agmatine from L-arginine: step 1/1. Its function is as follows. Catalyzes the biosynthesis of agmatine from arginine. The protein is Biosynthetic arginine decarboxylase of Yersinia pestis.